Here is a 902-residue protein sequence, read N- to C-terminus: Inter-alpha-trypsin inhibitor heavy chain H1 (902 aa).

Positions 1–28 (MDGTMGLQGLLCLCLASHLALQAMPTQG) are cleaved as a signal peptide. A VIT domain is found at 29–158 (SPTDSTKGNK…KATFQLTYEE (130 aa)). C52 is a glycosylation site (S-linked (Hex...) cysteine). N69 carries an N-linked (GlcNAc...) asparagine glycan. S121 is modified (phosphoserine). The N-linked (GlcNAc...) asparagine glycan is linked to N277. In terms of domain architecture, VWFA spans 282–442 (NKNVVFVIDI…WNFLEVRALE (161 aa)). A phosphothreonine mark is found at T394 and T399. Residues 637 to 651 (SASQPSPTHPSSSIQ) are compositionally biased toward polar residues. Residues 637–656 (SASQPSPTHPSSSIQKLPDR) are disordered. O-linked (GalNAc...) serine glycosylation occurs at S639. O-linked (GalNAc...) threonine glycosylation occurs at T644. At D663 the chain carries Aspartate 1-(chondroitin 4-sulfate)-ester. A propeptide spanning residues 664–902 (PHFIIRVPQK…HTDYIVPDIF (239 aa)) is cleaved from the precursor. N741 is a glycosylation site (N-linked (GlcNAc...) asparagine).

Belongs to the ITIH family. I-alpha-I plasma protease inhibitors are assembled from one or two heavy chains (HC) and one light chain, bikunin. Inter-alpha-inhibitor (I-alpha-I) is composed of ITIH1/HC1, ITIH2/HC2 and bikunin. Interacts with TNFAIP6 (via Link and CUB domains). Post-translationally, heavy chains are linked to bikunin via chondroitin 4-sulfate esterified to the alpha-carboxyl of the C-terminal aspartate after propeptide cleavage. In terms of processing, the S-linked glycan is composed of two 6-carbon sugars, possibly Glc or Gal.

It localises to the secreted. Its function is as follows. May act as a carrier of hyaluronan in serum or as a binding protein between hyaluronan and other matrix protein, including those on cell surfaces in tissues to regulate the localization, synthesis and degradation of hyaluronan which are essential to cells undergoing biological processes. This Sus scrofa (Pig) protein is Inter-alpha-trypsin inhibitor heavy chain H1 (ITIH1).